The primary structure comprises 224 residues: MDNRTLLNWSSILKNEKKKYYFINIINHLFFERQKKMIFPPKGKVFNAFVHTQLYDIKVVILGQDPYYKINQAHGLAFSVENIVKFIPSSLKNIQKEIISDLGQNRSFSHGCLTKWALQGVFLLNSVLTVEAGKPGSHYKLGWERFTNKVISIINEYCKGVVFLLWGSYAQKKICLIDRTRHYILLAPHPSPLSAYRGFFGCRHFSKTNKILKQQNKSPINWFF.

The Proton acceptor role is filled by aspartate 65.

This sequence belongs to the uracil-DNA glycosylase (UDG) superfamily. UNG family.

Its subcellular location is the cytoplasm. It catalyses the reaction Hydrolyzes single-stranded DNA or mismatched double-stranded DNA and polynucleotides, releasing free uracil.. Excises uracil residues from the DNA which can arise as a result of misincorporation of dUMP residues by DNA polymerase or due to deamination of cytosine. The sequence is that of Uracil-DNA glycosylase from Buchnera aphidicola subsp. Baizongia pistaciae (strain Bp).